Consider the following 139-residue polypeptide: Endoribonuclease YbeY (139 aa).

The Zn(2+) site is built by H99, H103, and H109.

This sequence belongs to the endoribonuclease YbeY family. It depends on Zn(2+) as a cofactor.

It is found in the cytoplasm. Functionally, single strand-specific metallo-endoribonuclease involved in late-stage 70S ribosome quality control and in maturation of the 3' terminus of the 16S rRNA. This chain is Endoribonuclease YbeY, found in Nautilia profundicola (strain ATCC BAA-1463 / DSM 18972 / AmH).